A 58-amino-acid chain; its full sequence is Large ribosomal subunit protein bL32 (58 aa).

The segment at 1–23 (MAVPARHTSSAKKNRRRTHYKLT) is disordered. A compositionally biased stretch (basic residues) spans 9 to 20 (SSAKKNRRRTHY).

The protein belongs to the bacterial ribosomal protein bL32 family.

This Lactococcus lactis subsp. cremoris (Streptococcus cremoris) protein is Large ribosomal subunit protein bL32 (rpmF).